The primary structure comprises 164 residues: Ubiquitin-fold modifier-conjugating enzyme 1 (164 aa).

Cys116 serves as the catalytic Glycyl thioester intermediate.

The protein belongs to the ubiquitin-conjugating enzyme family. UFC1 subfamily.

In terms of biological role, E2-like enzyme which forms an intermediate with UFM1 via a thioester linkage. The polypeptide is Ubiquitin-fold modifier-conjugating enzyme 1 (Drosophila persimilis (Fruit fly)).